We begin with the raw amino-acid sequence, 243 residues long: Small ribosomal subunit protein uS3 (243 aa).

The 69-residue stretch at 39 to 107 folds into the KH type-2 domain; it reads IRAYLIKELK…ETHLNIVEVR (69 aa). The segment at 214–243 is disordered; that stretch reads ASERRGLEGDAQGPASRERGDRPDRRRENA. The segment covering 229 to 243 has biased composition (basic and acidic residues); it reads SRERGDRPDRRRENA.

The protein belongs to the universal ribosomal protein uS3 family. Part of the 30S ribosomal subunit. Forms a tight complex with proteins S10 and S14.

Functionally, binds the lower part of the 30S subunit head. Binds mRNA in the 70S ribosome, positioning it for translation. The polypeptide is Small ribosomal subunit protein uS3 (Agrobacterium fabrum (strain C58 / ATCC 33970) (Agrobacterium tumefaciens (strain C58))).